The following is a 494-amino-acid chain: mRNA decay activator protein ZFP36L2 (494 aa).

Phosphoserine is present on Ser-57. The tract at residues Gly-93–Leu-113 is disordered. Ser-125 carries the phosphoserine modification. An RNA-binding motif is present at residues Arg-153–Leu-158. 2 C3H1-type zinc fingers span residues Arg-153–His-181 and Lys-191–Asp-219. Residues Tyr-170–Arg-211 form an RNA-binding region. Thr-238 bears the Phosphothreonine mark. 2 disordered regions span residues Ser-257–Cys-293 and Gln-397–Asp-494. A compositionally biased stretch (pro residues) spans Pro-406 to Ala-415. 2 stretches are compositionally biased toward low complexity: residues Thr-416–Arg-435 and Tyr-459–Asp-478. Ser-490 and Ser-492 each carry phosphoserine; by RPS6KA1.

As to quaternary structure, associates with the cytoplasmic CCR4-NOT deadenylase to trigger ARE-containing mRNA deadenylation and decay processes. Interacts with CNOT7; this interaction is inhibited in response to phorbol 12-myristate 13-acetate (PMA) treatment in a p38 MAPK-dependent manner. Interacts with CNOT6L. In terms of processing, phosphorylated by RPS6KA1 at Ser-490 and Ser-492 upon phorbol 12-myristate 13-acetate (PMA) treatment; this phosphorylation results in dissociation of the CCR4-NOT-deadenylase complex and induces p38 MAPK-mediated stabilization of the low-density lipoprotein (LDL) receptor (LDLR) mRNA. Phosphorylation occurs during early preadipocyte differentiation. In terms of tissue distribution, expressed mainly in the basal epidermal layer, weakly in the suprabasal epidermal layers. Expressed in epidermal keratinocytes (at protein level). Expressed in oocytes.

The protein localises to the nucleus. It is found in the cytoplasm. Zinc-finger RNA-binding protein that destabilizes several cytoplasmic AU-rich element (ARE)-containing mRNA transcripts by promoting their poly(A) tail removal or deadenylation, and hence provide a mechanism for attenuating protein synthesis. Acts as a 3'-untranslated region (UTR) ARE mRNA-binding adapter protein to communicate signaling events to the mRNA decay machinery. Functions by recruiting the CCR4-NOT deadenylase complex and probably other components of the cytoplasmic RNA decay machinery to the bound ARE-containing mRNAs, and hence promotes ARE-mediated mRNA deadenylation and decay processes. Binds to 3'-UTR ARE of numerous mRNAs. Promotes ARE-containing mRNA decay of the low-density lipoprotein (LDL) receptor (LDLR) mRNA in response to phorbol 12-myristate 13-acetate (PMA) treatment in a p38 MAPK-dependent manner. Positively regulates early adipogenesis by promoting ARE-mediated mRNA decay of immediate early genes (IEGs). Plays a role in mature peripheral neuron integrity by promoting ARE-containing mRNA decay of the transcriptional repressor REST mRNA. Plays a role in ovulation and oocyte meiotic maturation by promoting ARE-mediated mRNA decay of the luteinizing hormone receptor LHCGR mRNA. Acts as a negative regulator of erythroid cell differentiation: promotes glucocorticoid-induced self-renewal of erythroid cells by binding mRNAs that are induced or highly expressed during terminal erythroid differentiation and promotes their degradation, preventing erythroid cell differentiation. In association with ZFP36L1 maintains quiescence on developing B lymphocytes by promoting ARE-mediated decay of several mRNAs encoding cell cycle regulators that help B cells progress through the cell cycle, and hence ensuring accurate variable-diversity-joining (VDJ) recombination process and functional immune cell formation. Together with ZFP36L1 is also necessary for thymocyte development and prevention of T-cell acute lymphoblastic leukemia (T-ALL) transformation by promoting ARE-mediated mRNA decay of the oncogenic transcription factor NOTCH1 mRNA. This chain is mRNA decay activator protein ZFP36L2, found in Homo sapiens (Human).